Here is a 345-residue protein sequence, read N- to C-terminus: Erythronate-4-phosphate dehydrogenase (345 aa).

Substrate is bound at residue S45. The NAD(+) site is built by D146 and T174. R207 is an active-site residue. Residue D227 participates in NAD(+) binding. E232 is a catalytic residue. H249 serves as the catalytic Proton donor. G252 serves as a coordination point for NAD(+).

It belongs to the D-isomer specific 2-hydroxyacid dehydrogenase family. PdxB subfamily. As to quaternary structure, homodimer.

Its subcellular location is the cytoplasm. It catalyses the reaction 4-phospho-D-erythronate + NAD(+) = (R)-3-hydroxy-2-oxo-4-phosphooxybutanoate + NADH + H(+). It participates in cofactor biosynthesis; pyridoxine 5'-phosphate biosynthesis; pyridoxine 5'-phosphate from D-erythrose 4-phosphate: step 2/5. In terms of biological role, catalyzes the oxidation of erythronate-4-phosphate to 3-hydroxy-2-oxo-4-phosphonooxybutanoate. The chain is Erythronate-4-phosphate dehydrogenase from Ruthia magnifica subsp. Calyptogena magnifica.